The following is a 263-amino-acid chain: Complement C1q tumor necrosis factor-related protein 6 (263 aa).

The first 24 residues, 1–24 (MRVIMGTASLGSIWAVFLLPLVFG), serve as a signal peptide directing secretion. A glycan (N-linked (GlcNAc...) asparagine) is linked at Asn76. Residues 80-123 (LKGDKGDRGPSGTPGKPGKNGTRGDRGSQGIKGDKGQAGSPGSS) are disordered. In terms of domain architecture, Collagen-like spans 82-123 (GDKGDRGPSGTPGKPGKNGTRGDRGSQGIKGDKGQAGSPGSS). Residues 124–263 (CQTHYSAFSV…SGHLIKAEDN (140 aa)) enclose the C1q domain.

It is found in the secreted. The polypeptide is Complement C1q tumor necrosis factor-related protein 6 (C1qtnf6) (Rattus norvegicus (Rat)).